Consider the following 483-residue polypeptide: UDP-N-acetylmuramoyl-L-alanyl-D-glutamate--2,6-diaminopimelate ligase (483 aa).

Ser30 serves as a coordination point for UDP-N-acetyl-alpha-D-muramoyl-L-alanyl-D-glutamate. 109–115 (GTNGKTT) contributes to the ATP binding site. UDP-N-acetyl-alpha-D-muramoyl-L-alanyl-D-glutamate is bound by residues 151-152 (TT), Ser178, and Arg186. Lys218 carries the N6-carboxylysine modification. Meso-2,6-diaminopimelate contacts are provided by residues Arg380, 403 to 406 (DNPR), Gly453, and Glu457. The short motif at 403–406 (DNPR) is the Meso-diaminopimelate recognition motif element.

The protein belongs to the MurCDEF family. MurE subfamily. The cofactor is Mg(2+). In terms of processing, carboxylation is probably crucial for Mg(2+) binding and, consequently, for the gamma-phosphate positioning of ATP.

Its subcellular location is the cytoplasm. The catalysed reaction is UDP-N-acetyl-alpha-D-muramoyl-L-alanyl-D-glutamate + meso-2,6-diaminopimelate + ATP = UDP-N-acetyl-alpha-D-muramoyl-L-alanyl-gamma-D-glutamyl-meso-2,6-diaminopimelate + ADP + phosphate + H(+). Its pathway is cell wall biogenesis; peptidoglycan biosynthesis. In terms of biological role, catalyzes the addition of meso-diaminopimelic acid to the nucleotide precursor UDP-N-acetylmuramoyl-L-alanyl-D-glutamate (UMAG) in the biosynthesis of bacterial cell-wall peptidoglycan. This is UDP-N-acetylmuramoyl-L-alanyl-D-glutamate--2,6-diaminopimelate ligase from Chlamydia caviae (strain ATCC VR-813 / DSM 19441 / 03DC25 / GPIC) (Chlamydophila caviae).